The chain runs to 383 residues: MRRAINLINRNPRPYDIAADQSSLLFSSLPYDVVLNCLARVSRRYYPNLSCVSKSFQSLVRSPELAHMRSLIGKDDPVVYVCFSDTKPFLGRRLDWFTLNPNEKKTSVLNSFQVFSYYMLYCPSVSIGSKIYFVGGCMYKCLPGLLIFDSWSGELCVGPSMKEARMLPGVAVVNGKLYVMGGCREDQIQVEVFDPNSQTWEVGPLSSDGEVRYGKGLMRYGAIVTEAVALEGKVYCMSYKDGSHIIYDTKDGKCETFLMADGKAWRRGGVCVVNSVIYVYYINLGVMWYDPKDKVWREVKGLNKLDYKSIDMVGMVDCNGKLGFLWGNNTREIISGRTEKRIWCEMIVLERSGVEIHGTVEWSDLVGFVPHDYEIWRCLGVSY.

The 49-residue stretch at 23–71 folds into the F-box domain; the sequence is SLLFSSLPYDVVLNCLARVSRRYYPNLSCVSKSFQSLVRSPELAHMRSL. 3 Kelch repeats span residues 130 to 175, 176 to 220, and 269 to 317; these read KIYF…VVNG, KLYV…LMRY, and GVCV…GMVD.

The chain is F-box/kelch-repeat protein At2g22030 from Arabidopsis thaliana (Mouse-ear cress).